A 243-amino-acid chain; its full sequence is Small ribosomal subunit protein uS3 (243 aa).

The KH type-2 domain occupies 39–110 (IRGFIQKKYA…QVRINVVEIE (72 aa)). Positions 215–243 (DQPLPVGASPRRKGSRRPQQFEDRSNDGK) are disordered. A compositionally biased stretch (basic and acidic residues) spans 233–243 (QQFEDRSNDGK).

The protein belongs to the universal ribosomal protein uS3 family. In terms of assembly, part of the 30S ribosomal subunit. Forms a tight complex with proteins S10 and S14.

Binds the lower part of the 30S subunit head. Binds mRNA in the 70S ribosome, positioning it for translation. The chain is Small ribosomal subunit protein uS3 from Prochlorococcus marinus (strain MIT 9211).